Consider the following 275-residue polypeptide: 2,3,4,5-tetrahydropyridine-2,6-dicarboxylate N-succinyltransferase (275 aa).

Residues Arg-104 and Asp-141 each contribute to the substrate site.

The protein belongs to the transferase hexapeptide repeat family. Homotrimer.

The protein resides in the cytoplasm. The catalysed reaction is (S)-2,3,4,5-tetrahydrodipicolinate + succinyl-CoA + H2O = (S)-2-succinylamino-6-oxoheptanedioate + CoA. Its pathway is amino-acid biosynthesis; L-lysine biosynthesis via DAP pathway; LL-2,6-diaminopimelate from (S)-tetrahydrodipicolinate (succinylase route): step 1/3. This Tolumonas auensis (strain DSM 9187 / NBRC 110442 / TA 4) protein is 2,3,4,5-tetrahydropyridine-2,6-dicarboxylate N-succinyltransferase.